The chain runs to 102 residues: Gastrin/cholecystokinin-like peptide (102 aa).

The N-terminal stretch at 1 to 20 is a signal peptide; sequence MDKKVCVSILLAMLAIAALC. A propeptide spanning residues 21 to 45 is cleaved from the precursor; it reads RPMTELESARHGAQRKNSISDVSRR. Tyr-86 carries the post-translational modification Sulfotyrosine. Phe-92 is subject to Phenylalanine amide. Residues 96-102 constitute a propeptide that is removed on maturation; sequence SSEVTES.

Belongs to the gastrin/cholecystokinin family. Expressed in antrum, duodenum, colon, pancreas, brain and testis. No expression found in kidney, lung, liver, skin or distal two-thirds of small intestine. In the brain, strongly expressed in the pituitary gland with moderate expression in the neural lobe, brain stem and hypothalamus.

It localises to the secreted. Its function is as follows. May control digestion processes. The protein is Gastrin/cholecystokinin-like peptide (GAST) of Aquarana catesbeiana (American bullfrog).